Reading from the N-terminus, the 37-residue chain is Small ribosomal subunit protein eS32 (37 aa).

Belongs to the eukaryotic ribosomal protein eS32 family. Part of the small ribosomal subunit.

The chain is Small ribosomal subunit protein eS32 from Pyrococcus furiosus (strain ATCC 43587 / DSM 3638 / JCM 8422 / Vc1).